We begin with the raw amino-acid sequence, 384 residues long: 5-amino-6-(D-ribitylamino)uracil--L-tyrosine 4-hydroxyphenyl transferase 2 (384 aa).

Residues 53–286 (VSYVVNRNIY…IAISRVILHT (234 aa)) enclose the Radical SAM core domain. 3 residues coordinate [4Fe-4S] cluster: cysteine 67, cysteine 71, and cysteine 74.

The protein belongs to the radical SAM superfamily. CofH family. Consists of two subunits, CofG and CofH. Requires [4Fe-4S] cluster as cofactor.

The enzyme catalyses 5-amino-6-(D-ribitylamino)uracil + L-tyrosine + S-adenosyl-L-methionine = 5-amino-5-(4-hydroxybenzyl)-6-(D-ribitylimino)-5,6-dihydrouracil + 2-iminoacetate + 5'-deoxyadenosine + L-methionine + H(+). It functions in the pathway cofactor biosynthesis; coenzyme F0 biosynthesis. Its function is as follows. Catalyzes the radical-mediated synthesis of 5-amino-5-(4-hydroxybenzyl)-6-(D-ribitylimino)-5,6-dihydrouracil from 5-amino-6-(D-ribitylamino)uracil and L-tyrosine. This Methanosarcina mazei (strain ATCC BAA-159 / DSM 3647 / Goe1 / Go1 / JCM 11833 / OCM 88) (Methanosarcina frisia) protein is 5-amino-6-(D-ribitylamino)uracil--L-tyrosine 4-hydroxyphenyl transferase 2.